Reading from the N-terminus, the 73-residue chain is YFSYNDKVIKILEAEYLNTIHHVTAGTVISDKLEIACGSGILQVKKLQQESKKALNVEEFLRGTNILKATILK.

The protein belongs to the Fmt family.

It carries out the reaction L-methionyl-tRNA(fMet) + (6R)-10-formyltetrahydrofolate = N-formyl-L-methionyl-tRNA(fMet) + (6S)-5,6,7,8-tetrahydrofolate + H(+). Its function is as follows. Attaches a formyl group to the free amino group of methionyl-tRNA(fMet). The formyl group appears to play a dual role in the initiator identity of N-formylmethionyl-tRNA by promoting its recognition by IF2 and preventing the misappropriation of this tRNA by the elongation apparatus. This is Methionyl-tRNA formyltransferase (fmt) from Rickettsia akari.